The primary structure comprises 346 residues: tRNA N6-adenosine threonylcarbamoyltransferase (346 aa).

Fe cation-binding residues include His-110 and His-114. Substrate is bound by residues 132-136 (LLSGG), Asp-165, Gly-178, and Asn-274. Residue Asp-298 participates in Fe cation binding.

Belongs to the KAE1 / TsaD family. It depends on Fe(2+) as a cofactor.

It localises to the cytoplasm. It catalyses the reaction L-threonylcarbamoyladenylate + adenosine(37) in tRNA = N(6)-L-threonylcarbamoyladenosine(37) in tRNA + AMP + H(+). Functionally, required for the formation of a threonylcarbamoyl group on adenosine at position 37 (t(6)A37) in tRNAs that read codons beginning with adenine. Is involved in the transfer of the threonylcarbamoyl moiety of threonylcarbamoyl-AMP (TC-AMP) to the N6 group of A37, together with TsaE and TsaB. TsaD likely plays a direct catalytic role in this reaction. In Borreliella burgdorferi (strain ZS7) (Borrelia burgdorferi), this protein is tRNA N6-adenosine threonylcarbamoyltransferase.